The sequence spans 265 residues: RWD domain-containing protein 3 (265 aa).

An RWD domain is found at E7–I114.

It localises to the nucleus. It is found in the cytoplasm. Functionally, enhancer of SUMO conjugation. Increases SUMO conjugation to proteins by promoting the: binding of E1 and E2 enzymes, thioester linkage between SUMO and ube2i/ubc9 and transfer of SUMO to specific target proteins which include hif1a, pias, nfkbia, nr3c1 and top1. Has no effect on ubiquitination. In Xenopus tropicalis (Western clawed frog), this protein is RWD domain-containing protein 3 (rwdd3).